The following is an 822-amino-acid chain: Structure-specific endonuclease subunit SLX4 (822 aa).

6 disordered regions span residues 1-39 (MSHLDLTRHRTRSPSPSQIFGSSTTPVATNSTHSEPSAS), 73-117 (TPAV…PRPL), 277-362 (GTTN…GVSD), 390-418 (RVSSDEDKLGVPSAPASSRQSARDRTSVS), 456-507 (KSHE…SGQL), and 589-676 (KNSA…QASS). Residues 13-39 (SPSPSQIFGSSTTPVATNSTHSEPSAS) are compositionally biased toward polar residues. Positions 280–294 (NSSSSEGSSNKSSGK) are enriched in low complexity. Positions 310–320 (VTTITSLSTAQ) are enriched in polar residues. Over residues 342 to 354 (GKRSKSQTKKGGN) the composition is skewed to basic residues. Positions 460–470 (SSTLTLPSTST) are enriched in low complexity. Polar residues predominate over residues 471 to 484 (NASNQGFSSQNTIN). The segment covering 490-506 (SQTTSTTTESTGVESGQ) has biased composition (low complexity). Over residues 589-612 (KNSAPTSLPANNANPPDSHASGQK) the composition is skewed to polar residues. The segment covering 627-636 (TTKRASKAPQ) has biased composition (basic residues). Over residues 637-650 (KKQSTSSTSHSAKA) the composition is skewed to low complexity.

It belongs to the SLX4 family. In terms of assembly, forms a heterodimer with SLX1. In terms of processing, phosphorylated in response to DNA damage.

The protein resides in the nucleus. Functionally, regulatory subunit of the SLX1-SLX4 structure-specific endonuclease that resolves DNA secondary structures generated during DNA repair and recombination. Has endonuclease activity towards branched DNA substrates, introducing single-strand cuts in duplex DNA close to junctions with ss-DNA. The chain is Structure-specific endonuclease subunit SLX4 from Coccidioides immitis (strain RS) (Valley fever fungus).